Reading from the N-terminus, the 349-residue chain is Single-stranded TG1-3 DNA-binding protein (349 aa).

Residues 45 to 127 (FRVFVGRLST…REIVVQKARP (83 aa)) form the RRM 1 domain. Disordered stretches follow at residues 121-208 (VVQK…PNSI) and 298-349 (EDKQ…AITA). Ser152 bears the Phosphoserine mark. Residues 168 to 179 (ANTATAPSSNEA) are compositionally biased toward polar residues. Residues 181–191 (GVDKKQNEIKG) are compositionally biased toward basic and acidic residues. In terms of domain architecture, RRM 2 spans 206–296 (NSIYVSGLSV…LTLVVKSAVF (91 aa)). 2 stretches are compositionally biased toward basic and acidic residues: residues 298–310 (EDKQ…KNEN) and 327–340 (TEPK…EEKS).

The protein resides in the cytoplasm. It is found in the nucleus. It localises to the chromosome. Its subcellular location is the telomere. Its function is as follows. Binds single-stranded telomeric sequences of the type (TG[1-3])n in vitro. Has a role in meiosis. In Schizosaccharomyces pombe (strain 972 / ATCC 24843) (Fission yeast), this protein is Single-stranded TG1-3 DNA-binding protein (tcg1).